Here is a 151-residue protein sequence, read N- to C-terminus: 3-hydroxyacyl-[acyl-carrier-protein] dehydratase FabZ (151 aa).

Histidine 54 is an active-site residue.

The protein belongs to the thioester dehydratase family. FabZ subfamily.

It is found in the cytoplasm. It catalyses the reaction a (3R)-hydroxyacyl-[ACP] = a (2E)-enoyl-[ACP] + H2O. Involved in unsaturated fatty acids biosynthesis. Catalyzes the dehydration of short chain beta-hydroxyacyl-ACPs and long chain saturated and unsaturated beta-hydroxyacyl-ACPs. The sequence is that of 3-hydroxyacyl-[acyl-carrier-protein] dehydratase FabZ from Blochmanniella pennsylvanica (strain BPEN).